A 379-amino-acid chain; its full sequence is Cytochrome b (379 aa).

4 helical membrane-spanning segments follow: residues Phe-33 to Met-53, Trp-77 to Val-98, Trp-113 to Leu-133, and Phe-178 to Leu-198. Residues His-83 and His-97 each coordinate heme b. Residues His-182 and His-196 each contribute to the heme b site. His-201 contributes to the a ubiquinone binding site. 4 consecutive transmembrane segments (helical) span residues Thr-226 to Tyr-246, Leu-288 to Gln-308, Leu-320 to Gly-340, and Phe-347 to Pro-367.

The protein belongs to the cytochrome b family. In terms of assembly, the cytochrome bc1 complex contains 11 subunits: 3 respiratory subunits (MT-CYB, CYC1 and UQCRFS1), 2 core proteins (UQCRC1 and UQCRC2) and 6 low-molecular weight proteins (UQCRH/QCR6, UQCRB/QCR7, UQCRQ/QCR8, UQCR10/QCR9, UQCR11/QCR10 and a cleavage product of UQCRFS1). This cytochrome bc1 complex then forms a dimer. It depends on heme b as a cofactor.

The protein localises to the mitochondrion inner membrane. Functionally, component of the ubiquinol-cytochrome c reductase complex (complex III or cytochrome b-c1 complex) that is part of the mitochondrial respiratory chain. The b-c1 complex mediates electron transfer from ubiquinol to cytochrome c. Contributes to the generation of a proton gradient across the mitochondrial membrane that is then used for ATP synthesis. This Lepilemur aeeclis (Sportive lemur) protein is Cytochrome b (MT-CYB).